Consider the following 720-residue polypeptide: Biotin biosynthesis bifunctional protein BioWF (720 aa).

The interval 1 to 39 (MRFSIKMRASARVSSSPSTSDGSSGDHTESRDRADRHIS) is disordered. The segment covering 8-23 (RASARVSSSPSTSDGS) has biased composition (low complexity). Positions 24 to 39 (SGDHTESRDRADRHIS) are enriched in basic and acidic residues. Residue arginine 314 participates in substrate binding. Pyridoxal 5'-phosphate is bound at residue 401 to 402 (GY). Substrate is bound at residue histidine 439. Pyridoxal 5'-phosphate is bound by residues serine 488, 513 to 516 (DDAH), and 564 to 567 (TASK). An N6-(pyridoxal phosphate)lysine modification is found at lysine 567. Residue threonine 684 coordinates substrate.

It in the N-terminal section; belongs to the BioW family. This sequence in the C-terminal section; belongs to the class-II pyridoxal-phosphate-dependent aminotransferase family. BioF subfamily. Homodimer. Mg(2+) is required as a cofactor. Pyridoxal 5'-phosphate serves as cofactor.

It catalyses the reaction heptanedioate + ATP + CoA = 6-carboxyhexanoyl-CoA + AMP + diphosphate. It carries out the reaction 6-carboxyhexanoyl-[ACP] + L-alanine + H(+) = (8S)-8-amino-7-oxononanoate + holo-[ACP] + CO2. It participates in metabolic intermediate metabolism; pimeloyl-CoA biosynthesis; pimeloyl-CoA from pimelate: step 1/1. Its pathway is cofactor biosynthesis; biotin biosynthesis. Its function is as follows. Catalyzes both the decarboxylative condensation of pimeloyl-[acyl-carrier protein] and L-alanine to produce 8-amino-7-oxononanoate (AON), [acyl-carrier protein], and carbon dioxide, and the transformation of pimelate into pimeloyl-CoA with concomitant hydrolysis of ATP to AMP. This is Biotin biosynthesis bifunctional protein BioWF (bioWF) from Corynebacterium kroppenstedtii (strain DSM 44385 / JCM 11950 / CIP 105744 / CCUG 35717).